The chain runs to 252 residues: Probable transcriptional regulatory protein CE1776 (252 aa).

The segment at 1–22 is disordered; sequence MAGHSKWATTKHKKAANDAKRG.

Belongs to the TACO1 family.

It is found in the cytoplasm. In Corynebacterium efficiens (strain DSM 44549 / YS-314 / AJ 12310 / JCM 11189 / NBRC 100395), this protein is Probable transcriptional regulatory protein CE1776.